Here is a 217-residue protein sequence, read N- to C-terminus: Biogenesis of lysosome-related organelles complex 1 subunit 4 (217 aa).

The tract at residues 1–57 (MEGSFSDGGALPEGLAEEAEPQGAAWSGDSGTVSQSHSSASGPWEDEGAEDGAPGRD) is disordered. The span at 29–41 (DSGTVSQSHSSAS) shows a compositional bias: polar residues. Residues 136–165 (DRLEAFVRMVGGRVARMEEQVTKAEAELGT) adopt a coiled-coil conformation. T165 carries the post-translational modification Phosphothreonine.

It belongs to the BLOC1S4 family. As to quaternary structure, interacts with BLOC1S5 and BLOC1S6. Component of the biogenesis of lysosome-related organelles complex 1 (BLOC-1) composed of BLOC1S1, BLOC1S2, BLOC1S3, BLOC1S4, BLOC1S5, BLOC1S6, DTNBP1/BLOC1S7 and SNAPIN/BLOC1S8. Octamer composed of one copy each BLOC1S1, BLOC1S2, BLOC1S3, BLOC1S4, BLOC1S5, BLOC1S6, DTNBP1/BLOC1S7 and SNAPIN/BLOC1S8. The BLOC-1 complex associates with the AP-3 protein complex and membrane protein cargos.

It is found in the cytoplasm. In terms of biological role, component of the BLOC-1 complex, a complex that is required for normal biogenesis of lysosome-related organelles (LRO), such as platelet dense granules and melanosomes. In concert with the AP-3 complex, the BLOC-1 complex is required to target membrane protein cargos into vesicles assembled at cell bodies for delivery into neurites and nerve terminals. The BLOC-1 complex, in association with SNARE proteins, is also proposed to be involved in neurite extension. Plays a role in intracellular vesicle trafficking. In Homo sapiens (Human), this protein is Biogenesis of lysosome-related organelles complex 1 subunit 4 (BLOC1S4).